The sequence spans 432 residues: Beta-fructosidase (432 aa).

Substrate is bound by residues 14–17, Gln-33, Trp-41, 74–75, Tyr-92, 137–138, 188–190, Thr-208, and Trp-260; these read WMND, FS, RD, and EIE. Asp-17 is a catalytic residue.

The protein belongs to the glycosyl hydrolase 32 family.

It carries out the reaction Hydrolysis of terminal non-reducing beta-D-fructofuranoside residues in beta-D-fructofuranosides.. In terms of biological role, hydrolysis of sucrose, raffinose, inulin and levan. Specific for the fructose moiety and the beta-anomeric configuration of the glycosidic linkages of its substrates. The enzyme released fructose from sucrose and raffinose, and the fructose polymer inulin is hydrolyzed quantitatively in an exo-type fashion. The protein is Beta-fructosidase (bfrA) of Thermotoga maritima (strain ATCC 43589 / DSM 3109 / JCM 10099 / NBRC 100826 / MSB8).